We begin with the raw amino-acid sequence, 465 residues long: Glucose-1-phosphate adenylyltransferase (465 aa).

Residues glycine 164, glutamate 181 to lysine 182, and serine 199 each bind alpha-D-glucose 1-phosphate.

This sequence belongs to the bacterial/plant glucose-1-phosphate adenylyltransferase family. Homotetramer.

It catalyses the reaction alpha-D-glucose 1-phosphate + ATP + H(+) = ADP-alpha-D-glucose + diphosphate. The protein operates within glycan biosynthesis; glycogen biosynthesis. In terms of biological role, involved in the biosynthesis of ADP-glucose, a building block required for the elongation reactions to produce glycogen. Catalyzes the reaction between ATP and alpha-D-glucose 1-phosphate (G1P) to produce pyrophosphate and ADP-Glc. The chain is Glucose-1-phosphate adenylyltransferase from Arthrobacter sp. (strain FB24).